Here is a 575-residue protein sequence, read N- to C-terminus: Putative export ATP-binding/permease protein RBE_0492 (575 aa).

Residues 20–303 (LIIVIISLLS…IFELLSEMHL (284 aa)) enclose the ABC transmembrane type-1 domain. 6 helical membrane passes run 21–41 (IIVI…GNVF), 61–81 (ILYI…RSYF), 135–155 (FLSF…LMFF), 158–178 (FKLA…IIKF), 242–262 (ALFF…VIWI), and 277–297 (IISF…IFEL). The 236-residue stretch at 336-571 (LEFKNVNFSY…SDLYRTIYKE (236 aa)) folds into the ABC transporter domain. An ATP-binding site is contributed by 371–378 (GRSGSGKS).

It belongs to the ABC transporter superfamily. Homodimer.

The protein resides in the cell inner membrane. Part of an ABC transporter complex. Transmembrane domains (TMD) form a pore in the inner membrane and the ATP-binding domain (NBD) is responsible for energy generation. The protein is Putative export ATP-binding/permease protein RBE_0492 of Rickettsia bellii (strain RML369-C).